Reading from the N-terminus, the 1227-residue chain is ATP-dependent helicase/nuclease subunit A (1227 aa).

The UvrD-like helicase ATP-binding domain maps to 37–503 (QKRTAEQIEA…ILLKENFRSQ (467 aa)). ATP is bound at residue 58–65 (ASAGSGKT). A UvrD-like helicase C-terminal domain is found at 532 to 816 (SLVAGSPGQK…QLMTIHKSKG (285 aa)).

The protein belongs to the helicase family. AddA subfamily. As to quaternary structure, heterodimer of AddA and AddB/RexB. Mg(2+) is required as a cofactor.

It carries out the reaction Couples ATP hydrolysis with the unwinding of duplex DNA by translocating in the 3'-5' direction.. The enzyme catalyses ATP + H2O = ADP + phosphate + H(+). The heterodimer acts as both an ATP-dependent DNA helicase and an ATP-dependent, dual-direction single-stranded exonuclease. Recognizes the chi site generating a DNA molecule suitable for the initiation of homologous recombination. The AddA nuclease domain is required for chi fragment generation; this subunit has the helicase and 3' -&gt; 5' nuclease activities. The chain is ATP-dependent helicase/nuclease subunit A from Streptococcus suis (strain 98HAH33).